The chain runs to 286 residues: General stress protein 39 (286 aa).

The tract at residues 1 to 26 (MANYPKELPAQTQSRQPGIESEMNPS) is disordered. 46–70 (LITGGDSGIGRAVSVAYAKEGADIA) contacts NAD(+). Position 178 (S178) interacts with substrate. The Proton acceptor role is filled by Y191.

The protein belongs to the short-chain dehydrogenases/reductases (SDR) family.

The protein is General stress protein 39 (ydaD) of Bacillus subtilis (strain 168).